The following is an 80-amino-acid chain: Defensin coprisin (80 aa).

A signal peptide spans 1 to 20; the sequence is MAKLIAFALVASLCLSMVLC. Positions 21 to 37 are excised as a propeptide; the sequence is NPLPEEVQEEGLVRQKR. Intrachain disulfides connect Cys-40–Cys-71, Cys-57–Cys-76, and Cys-61–Cys-78.

This sequence belongs to the invertebrate defensin family. Type 1 subfamily.

The protein resides in the secreted. The protein localises to the target cell membrane. Potent broad-spectrum antibacterial peptide against both Gram-positive (B.subtilis, S.epidermidis, and S.aureus) and Gram-negative bacteria (E.coli, S.typhimurium, and P.aeruginosa). Is also active against all antibiotic-resistant bacterial strains tested. Induces apoptosis in C.albicans, but does not disrupt the fungal plasma membrane at all. Acts by permeabilizing the bacterial cell membrane, but not human membranes. Also shows potent anti-inflammatory activities, since it reduces both LPS-induced nitric oxide release and pro-inflammatory cytokine production. Anti-inflammatory activities are initiated by suppressing the binding of LPS to toll-like receptor 4 (TLR4), and subsequently inhibiting the phosphorylation of p38 mitogen-activated protein kinase (MAPK) and nuclear translocation of NF-kB (TNFRSF11A). Does not show hemolytic activity against human erythrocytes. This Copris tripartitus (Dung beetle) protein is Defensin coprisin.